The sequence spans 524 residues: 2,3-bisphosphoglycerate-independent phosphoglycerate mutase (524 aa).

D13 and S63 together coordinate Mn(2+). The active-site Phosphoserine intermediate is the S63. Substrate-binding positions include H124, 154–155, R186, R192, 262–265, and K337; these read RD and RADR. Mn(2+) is bound by residues D404, H408, D445, H446, and H464.

The protein belongs to the BPG-independent phosphoglycerate mutase family. As to quaternary structure, monomer. It depends on Mn(2+) as a cofactor.

It carries out the reaction (2R)-2-phosphoglycerate = (2R)-3-phosphoglycerate. Its pathway is carbohydrate degradation; glycolysis; pyruvate from D-glyceraldehyde 3-phosphate: step 3/5. Its function is as follows. Catalyzes the interconversion of 2-phosphoglycerate and 3-phosphoglycerate. The protein is 2,3-bisphosphoglycerate-independent phosphoglycerate mutase of Thermomicrobium roseum (strain ATCC 27502 / DSM 5159 / P-2).